A 252-amino-acid chain; its full sequence is Phosphoribosyl-ATP pyrophosphatase (252 aa).

Belongs to the PRA-PH family.

It localises to the cytoplasm. The catalysed reaction is 1-(5-phospho-beta-D-ribosyl)-ATP + H2O = 1-(5-phospho-beta-D-ribosyl)-5'-AMP + diphosphate + H(+). It functions in the pathway amino-acid biosynthesis; L-histidine biosynthesis; L-histidine from 5-phospho-alpha-D-ribose 1-diphosphate: step 2/9. The sequence is that of Phosphoribosyl-ATP pyrophosphatase from Magnetococcus marinus (strain ATCC BAA-1437 / JCM 17883 / MC-1).